Reading from the N-terminus, the 81-residue chain is Short neurotoxin B (81 aa).

Residues 1–21 (MKTLLLTLVVVTIVCLDLGYT) form the signal peptide. 4 disulfides stabilise this stretch: Cys-24/Cys-43, Cys-38/Cys-60, Cys-62/Cys-73, and Cys-74/Cys-79.

Belongs to the three-finger toxin family. Short-chain subfamily. Type I alpha-neurotoxin sub-subfamily. In terms of tissue distribution, expressed by the venom gland.

Its subcellular location is the secreted. Its function is as follows. Binds to muscle nicotinic acetylcholine receptor (nAChR) and inhibit acetylcholine from binding to the receptor, thereby impairing neuromuscular transmission. The chain is Short neurotoxin B from Aipysurus laevis (Olive sea snake).